The sequence spans 81 residues: Small ribosomal subunit protein bS16 (81 aa).

It belongs to the bacterial ribosomal protein bS16 family.

This Phytoplasma mali (strain AT) protein is Small ribosomal subunit protein bS16.